A 265-amino-acid polypeptide reads, in one-letter code: Regulator of G-protein signaling 9-binding protein (265 aa).

The interval 1–37 (MAAPEVSSAGPNMLHPNSRTLTLRGKRGHAAEDSSQG) is disordered. Residues 70–92 (TRLREELEESRKKAFDLSTDLSN) adopt a coiled-coil conformation. Positions 168 to 187 (KSPSSSRMHENQQRTERPCS) are disordered. Over residues 174 to 186 (RMHENQQRTERPC) the composition is skewed to basic and acidic residues.

Belongs to the RGS7BP/RGS9BP family.

In terms of biological role, regulator of G protein-coupled receptor (GPCR) signaling. Probably acts by regulating the activity of some 'R7' family protein (RGS6, RGS7, RGS9 and/or RGS11). The protein is Regulator of G-protein signaling 9-binding protein (rgs9bp) of Xenopus tropicalis (Western clawed frog).